Consider the following 349-residue polypeptide: Protein Wnt-7b (349 aa).

The signal sequence occupies residues 1–24 (MHRNFRKWIFYVFLCFGVIYVKLG). Cystine bridges form between C73/C84, C123/C131, C133/C152, C200/C214, and C202/C209. Residues N83 and N127 are each glycosylated (N-linked (GlcNAc...) asparagine). The O-palmitoleoyl serine; by PORCN moiety is linked to residue S206. Residues 238-266 (VEVVRASRLRQPTFLKIKQIKSYQKPMET) are disordered linker. Intrachain disulfides connect C278–C309, C294–C304, C308–C348, C324–C339, C326–C336, and C331–C332. The N-linked (GlcNAc...) asparagine glycan is linked to N295.

Belongs to the Wnt family. Post-translationally, palmitoleoylation is required for efficient binding to frizzled receptors. Depalmitoleoylation leads to Wnt signaling pathway inhibition. In terms of tissue distribution, expressed in differentiating lens fiber cells.

The protein localises to the secreted. Its subcellular location is the extracellular space. It localises to the extracellular matrix. Its function is as follows. Ligand for members of the frizzled family of seven transmembrane receptors that functions in the canonical Wnt/beta-catenin signaling pathway. Required for normal fusion of the chorion and the allantois during placenta development. Required for central nervous system (CNS) angiogenesis and blood-brain barrier regulation. The sequence is that of Protein Wnt-7b (WNT7B) from Gallus gallus (Chicken).